We begin with the raw amino-acid sequence, 129 residues long: Fluoride-specific ion channel FluC (129 aa).

4 consecutive transmembrane segments (helical) span residues 4-24, 30-50, 63-83, and 95-115; these read VLIVMLGGFIGANLRYWLGEW, GFPTGTFVINAIGCFLLGWLL, WSLLLGTGLIGSFTTFSTFSV, and IVASLYVFGSIFLGIGLAYIG. Residues G73 and T76 each contribute to the Na(+) site.

It belongs to the fluoride channel Fluc/FEX (TC 1.A.43) family.

It is found in the cell membrane. The enzyme catalyses fluoride(in) = fluoride(out). With respect to regulation, na(+) is not transported, but it plays an essential structural role and its presence is essential for fluoride channel function. Its function is as follows. Fluoride-specific ion channel. Important for reducing fluoride concentration in the cell, thus reducing its toxicity. This chain is Fluoride-specific ion channel FluC, found in Oceanobacillus iheyensis (strain DSM 14371 / CIP 107618 / JCM 11309 / KCTC 3954 / HTE831).